The primary structure comprises 345 residues: Ubiquitin-associated domain-containing protein 2 (345 aa).

The N-terminal stretch at 1-39 is a signal peptide; sequence MFTSTGSSGLYKAPLSKSLLLVPSALSLLLTLLLPHCQK. Over 40–91 the chain is Extracellular; sequence FFVYDLHAVKHDLQIWRLICGRIICLDLKDAFCSGLLIYNFRIFERRYGSRK. Residues 92–112 traverse the membrane as a helical segment; the sequence is FASFLLGSWVLSALFDFILVE. Topologically, residues 113-125 are cytoplasmic; sequence AVQYSLGVTVASN. Residues 126 to 146 form a helical membrane-spanning segment; sequence LPSGFLAPVFALFVPFHCSIP. The Extracellular portion of the chain corresponds to 147-163; the sequence is RVQVAQILGPLSITNKT. The N-linked (GlcNAc...) asparagine glycan is linked to asparagine 161. Residues 164 to 184 traverse the membrane as a helical segment; sequence LIYILGLQLFTSGSYIWIVAM. Over 185 to 345 the chain is Cytoplasmic; sequence SGLISGMCYD…NVATNFLLQH (161 aa). The interval 287-306 is disordered; that stretch reads NINYQDGPRSEQRASPPLEV. Residues 305 to 345 enclose the UBA domain; sequence EVSEEQVARLMEMGFSRGDALEALRASNNDLNVATNFLLQH.

In terms of assembly, interacts with LMBR1L, FAF2, AMFR and VCP.

The protein resides in the endoplasmic reticulum membrane. Restricts trafficking of FAF2 from the endoplasmic reticulum to lipid droplets. In association with LMBR1L and E3 ubiquitin-protein ligase AMFR, negatively regulates the canonical Wnt signaling pathway in the lymphocytes by promoting the ubiquitin-mediated degradation of CTNNB1 and Wnt receptors FZD6 and LRP6. This Mus musculus (Mouse) protein is Ubiquitin-associated domain-containing protein 2 (Ubac2).